The following is a 604-amino-acid chain: ERAD-associated E3 ubiquitin-protein ligase component HRD3B (604 aa).

Positions Met1 to Ala25 are cleaved as a signal peptide. Positions Glu48–Gly69 are disordered. Residues Asn78 and Asn105 are each glycosylated (N-linked (GlcNAc...) asparagine). Sel1-like repeat units lie at residues Pro125 to Asn160, Val244 to Ala274, Leu279 to Asn307, Ser311 to Gly344, Pro346 to Gly380, Ala464 to Ala492, and Ala498 to Ala528. N-linked (GlcNAc...) asparagine glycosylation is present at Asn293.

Belongs to the sel-1 family.

May be involved in the endoplasmic reticulum (ER) quality control system called ER-associated degradation (ERAD). The sequence is that of ERAD-associated E3 ubiquitin-protein ligase component HRD3B from Arabidopsis thaliana (Mouse-ear cress).